The primary structure comprises 657 residues: UvrABC system protein B (657 aa).

One can recognise a Helicase ATP-binding domain in the interval Lys25 to Arg182. Position 38-45 (Gly38–Thr45) interacts with ATP. Positions Tyr91–Ile114 match the Beta-hairpin motif. The Helicase C-terminal domain occupies Gln429 to Ile595. The 36-residue stretch at Lys621–Lys656 folds into the UVR domain.

Belongs to the UvrB family. As to quaternary structure, forms a heterotetramer with UvrA during the search for lesions. Interacts with UvrC in an incision complex.

The protein resides in the cytoplasm. Its function is as follows. The UvrABC repair system catalyzes the recognition and processing of DNA lesions. A damage recognition complex composed of 2 UvrA and 2 UvrB subunits scans DNA for abnormalities. Upon binding of the UvrA(2)B(2) complex to a putative damaged site, the DNA wraps around one UvrB monomer. DNA wrap is dependent on ATP binding by UvrB and probably causes local melting of the DNA helix, facilitating insertion of UvrB beta-hairpin between the DNA strands. Then UvrB probes one DNA strand for the presence of a lesion. If a lesion is found the UvrA subunits dissociate and the UvrB-DNA preincision complex is formed. This complex is subsequently bound by UvrC and the second UvrB is released. If no lesion is found, the DNA wraps around the other UvrB subunit that will check the other stand for damage. This is UvrABC system protein B from Clostridium botulinum (strain Alaska E43 / Type E3).